A 127-amino-acid chain; its full sequence is Fluoride-specific ion channel FluC (127 aa).

4 consecutive transmembrane segments (helical) span residues 4 to 24 (SLLA…GLGM), 35 to 55 (PGTL…IAFF), 68 to 88 (LLIT…AEVV), and 96 to 116 (ILWA…MTAA). 2 residues coordinate Na(+): G75 and T78.

The protein belongs to the fluoride channel Fluc/FEX (TC 1.A.43) family.

The protein resides in the cell inner membrane. The enzyme catalyses fluoride(in) = fluoride(out). With respect to regulation, na(+) is not transported, but it plays an essential structural role and its presence is essential for fluoride channel function. Functionally, fluoride-specific ion channel. Important for reducing fluoride concentration in the cell, thus reducing its toxicity. The protein is Fluoride-specific ion channel FluC of Pseudomonas putida (strain W619).